The sequence spans 140 residues: MAENREPRGAVEAELDPVEYTLRKRLPSRLPRRPNDIYVNMKTDFKAQLARCQKLLDGGARGQNACSEIYIHGLGLAINRAINIALQLQAGSFGSLQVAANTSTVELVDELEPETDTREPLTRIRNNSAIHIRVFRVTPK.

It belongs to the histone-like Alba family. Component of nuclear RNase P and RNase MRP complexes. RNase P consists of a catalytic RNA moiety and 10 different protein chains; POP1, POP4, POP5, POP7, RPP14, RPP21, RPP25, RPP30, RPP38 and RPP40. Within the RNase P complex, POP1, POP7 and RPP25 form the 'finger' subcomplex, POP5, RPP14, RPP40 and homodimeric RPP30 form the 'palm' subcomplex, and RPP21, POP4 and RPP38 form the 'wrist' subcomplex. All subunits of the RNase P complex interact with the catalytic RNA. Several subunits of RNase P are also part of the RNase MRP complex. RNase MRP consists of a catalytic RNA moiety and about 8 protein subunits; POP1, POP7, RPP25, RPP30, RPP38, RPP40 and possibly also POP4 and POP5. Interacts with SMN1. POP7 forms a heterodimer with RPP25 that binds to the P3 stem loop of the catalytic RNA.

The protein localises to the nucleus. It is found in the nucleolus. Its subcellular location is the cytoplasm. It localises to the cytoplasmic granule. Its function is as follows. Component of ribonuclease P, a ribonucleoprotein complex that generates mature tRNA molecules by cleaving their 5'-ends. Also a component of the MRP ribonuclease complex, which cleaves pre-rRNA sequences. This is Ribonuclease P protein subunit p20 (POP7) from Homo sapiens (Human).